A 227-amino-acid chain; its full sequence is uncharacterized protein (227 aa).

The next 7 membrane-spanning stretches (helical) occupy residues 15-34 (FIAA…FLIY), 55-77 (TFLF…ASGV), 92-114 (AFSM…YSLL), 121-140 (FPGE…TSLL), 145-167 (LVFL…VNYS), 180-202 (PLYI…FLPL), and 206-224 (FAIY…YRVL).

Its subcellular location is the cell membrane. This is an uncharacterized protein from Archaeoglobus fulgidus (strain ATCC 49558 / DSM 4304 / JCM 9628 / NBRC 100126 / VC-16).